We begin with the raw amino-acid sequence, 862 residues long: Protein JOKA2 (862 aa).

One can recognise a PB1 domain in the interval 6–90 (SIVIKVKYEE…NPLRISARLN (85 aa)). Positions 92–106 (GERSGRASARSSGNS) are enriched in low complexity. Disordered regions lie at residues 92–117 (GERS…VQPP), 194–234 (KGNT…ASNE), and 295–345 (VRNS…DSSG). Positions 325-345 (SASSSKVKQCNWDSPNADSSG) are enriched in polar residues. The segment at 442–492 (HKGVRCDGCGVHPITGPRFISKVKENYDLCSICFAEMGNDADYIRMDRPLT) adopts a ZZ-type; degenerate zinc-finger fold. Residues C447, C450, C471, and C474 each contribute to the Zn(2+) site. A UBA domain is found at 811-860 (SVDDLCGVAEWDPILEELKEMGFCDKEMNKKLLKKNNGSIKRVVMDLIAG). An ATG8 interacting motif (AIM) motif is present at residues 817–824 (GVAEWDPI).

Interacts (via C-terminal AIM motif) with ATG8CL.

It is found in the vacuole. The protein resides in the cytoplasmic vesicle. The protein localises to the autophagosome. Autophagic substrate that functions as a host autophagy cargo receptor. Requires ATG8 protein expression to be recognized as an autophagic substrate. Activates ATG8CL-mediated selective autophagy, and contributes to defense against the fungal pathogen Phytophtora infestans. This chain is Protein JOKA2, found in Solanum tuberosum (Potato).